The primary structure comprises 705 residues: MGKDSQHYYGKHGTPQKYDPTFKGPIYNRGCTDIICCVLLFLAIVGYVAVGIIAWTHGDPRKVIYPTDSRGEFCGQKGTKNADKPFLFYFNIVKCASPLVLLEFHCPTPQICVKQCPDRYLTFLSARNSRDFDYYKQFCVPGFKNNKGVAEVLRDGECPAVIIPSKPLAQRCFPAIHASKGVLMVGNETTYEDGHGTRKNVTDLVEGAKKANKVLEARQLAMQIFEDYTVSWYWIVIGLVIAMLLSLMFIVLLRFLAGVMVWVMIVMVILVLGYGIFHCYAEYSRLRGEAGSDVSLVDLGFQTDLRVYLHLRQTWMAFMIILSILEVVIILLLIFLRKRILIAIALIKEASRAVGHVMCSMLYPLVTFFLLCLCIAYWASTSVFLSTSNVAVYKIVDDTPCPLLGKTCNPETFPLNESRQCPNGRCQFAFYGGESTYHRALLGLQIFNAFMFFWLANFVLALGQVTLAGAFASYYWAMRKPDDMPAFPLFSAFGRALRYHTGSLAFGSLILAIVQIIRVMLEYLDQRLKAAQNKFAKFLMVCLKCCFWCLEKFIKFLNRNAYIMIAIYGTNFCTSARNAFFLLMRNIIRVAVLDKVTDFLFLLGKLLIVGSVGILAFFFFTHRIRIVQDTAPPLNYYWVPILTVIIGSYLIAHGFFSVYGMCVDTLFLCFLEDLERNDGSAERPYFMSSTLKKLLNKTNKKVAES.

Residues 1–33 (MGKDSQHYYGKHGTPQKYDPTFKGPIYNRGCTD) lie on the Cytoplasmic side of the membrane. Residue threonine 14 is modified to Phosphothreonine. A helical transmembrane segment spans residues 34-54 (IICCVLLFLAIVGYVAVGIIA). Residues 55–232 (WTHGDPRKVI…QIFEDYTVSW (178 aa)) are Extracellular-facing. 2 N-linked (GlcNAc...) asparagine glycosylation sites follow: asparagine 187 and asparagine 200. Residues 233-253 (YWIVIGLVIAMLLSLMFIVLL) traverse the membrane as a helical segment. Over 254 to 256 (RFL) the chain is Cytoplasmic. The chain crosses the membrane as a helical span at residues 257–277 (AGVMVWVMIVMVILVLGYGIF). Residues 278–315 (HCYAEYSRLRGEAGSDVSLVDLGFQTDLRVYLHLRQTW) lie on the Extracellular side of the membrane. The chain crosses the membrane as a helical span at residues 316–336 (MAFMIILSILEVVIILLLIFL). Residues 337–364 (RKRILIAIALIKEASRAVGHVMCSMLYP) lie on the Cytoplasmic side of the membrane. A helical transmembrane segment spans residues 365-385 (LVTFFLLCLCIAYWASTSVFL). The Extracellular segment spans residues 386 to 453 (STSNVAVYKI…LQIFNAFMFF (68 aa)). The N-linked (GlcNAc...) asparagine glycan is linked to asparagine 416. A helical membrane pass occupies residues 454 to 476 (WLANFVLALGQVTLAGAFASYYW). At 477-503 (AMRKPDDMPAFPLFSAFGRALRYHTGS) the chain is on the cytoplasmic side. A helical membrane pass occupies residues 504-524 (LAFGSLILAIVQIIRVMLEYL). Topologically, residues 525–562 (DQRLKAAQNKFAKFLMVCLKCCFWCLEKFIKFLNRNAY) are extracellular. The helical transmembrane segment at 563-583 (IMIAIYGTNFCTSARNAFFLL) threads the bilayer. At 584-598 (MRNIIRVAVLDKVTD) the chain is on the cytoplasmic side. The chain crosses the membrane as a helical span at residues 599 to 619 (FLFLLGKLLIVGSVGILAFFF). Residues 620 to 637 (FTHRIRIVQDTAPPLNYY) are Extracellular-facing. The chain crosses the membrane as a helical span at residues 638-658 (WVPILTVIIGSYLIAHGFFSV). Residues 659–705 (YGMCVDTLFLCFLEDLERNDGSAERPYFMSSTLKKLLNKTNKKVAES) lie on the Cytoplasmic side of the membrane.

The protein belongs to the CTL (choline transporter-like) family. As to quaternary structure, interacts with COCH. In terms of processing, N-glycosylated.

The protein resides in the cell membrane. Its subcellular location is the mitochondrion outer membrane. It catalyses the reaction choline(out) + n H(+)(in) = choline(in) + n H(+)(out). The enzyme catalyses ethanolamine(out) + n H(+)(in) = ethanolamine(in) + n H(+)(out). Functionally, exhibits choline transporter activity, as choline/H+ antiporter. Also acts as a low-affinity ethanolamine/H+ antiporter, regulating the supply of extracellular ethanolamine (Etn) for the CDP-Etn pathway, redistribute intracellular Etn and balance the CDP-Cho and CDP-Etn arms of the Kennedy pathway. This Rattus norvegicus (Rat) protein is Choline transporter-like protein 2 (Slc44a2).